A 405-amino-acid chain; its full sequence is Deoxyguanosinetriphosphate triphosphohydrolase-like protein (405 aa).

The HD domain occupies 75-219; that stretch reads RLTHTIEVAQ…AAIADDIAYN (145 aa).

Belongs to the dGTPase family. Type 2 subfamily.

This Rhizobium leguminosarum bv. trifolii (strain WSM2304) protein is Deoxyguanosinetriphosphate triphosphohydrolase-like protein.